The sequence spans 380 residues: Sialidase-2 (380 aa).

The FRIP motif motif lies at 20 to 23 (YRIP). Substrate-binding residues include arginine 21 and arginine 41. The active-site Proton acceptor is the aspartate 46. The stretch at 127 to 138 (VTSTDHGRTWSS) is one BNR 1 repeat. Residues tyrosine 179 and tyrosine 181 each contribute to the substrate site. A BNR 2 repeat occupies 197–208 (FLSHDHGRTWAR). The substrate site is built by glutamate 218, arginine 237, and arginine 304. Tyrosine 334 functions as the Nucleophile in the catalytic mechanism. The active site involves glutamate 355.

It belongs to the glycosyl hydrolase 33 family. In terms of tissue distribution, expressed in skeletal muscle, fetal liver and embryonic carcinoma cell line NT2-D1.

It is found in the cytoplasm. The protein resides in the cytosol. It catalyses the reaction Hydrolysis of alpha-(2-&gt;3)-, alpha-(2-&gt;6)-, alpha-(2-&gt;8)- glycosidic linkages of terminal sialic acid residues in oligosaccharides, glycoproteins, glycolipids, colominic acid and synthetic substrates.. The enzyme catalyses a ganglioside GD1a + H2O = a ganglioside GM1 + N-acetylneuraminate. It carries out the reaction a ganglioside GM1 + H2O = a ganglioside GA1 + N-acetylneuraminate. The catalysed reaction is a ganglioside GT1b + H2O = a ganglioside GD1b + N-acetylneuraminate. It catalyses the reaction a ganglioside GD1b + H2O = a ganglioside GM1 + N-acetylneuraminate. The enzyme catalyses a ganglioside GD3 + H2O = a ganglioside GM3 + N-acetylneuraminate. It carries out the reaction a ganglioside GM3 + H2O = a beta-D-galactosyl-(1-&gt;4)-beta-D-glucosyl-(1&lt;-&gt;1)-ceramide + N-acetylneuraminate. The catalysed reaction is a ganglioside GM2 + H2O = a ganglioside GA2 + N-acetylneuraminate. It catalyses the reaction a neolactoside IV(3)-alpha-NeuAc-nLc4Cer(d18:1(4E)) + H2O = a neolactoside nLc4Cer(d18:1(4E)) + N-acetylneuraminate. The enzyme catalyses N-acetyl-alpha-neuraminosyl-(2-&gt;3)-beta-D-galactosyl-(1-&gt;4)-D-glucose + H2O = lactose + N-acetylneuraminate. Functionally, exo-alpha-sialidase that catalyzes the hydrolytic cleavage of the terminal sialic acid (N-acetylneuraminic acid, Neu5Ac) of a glycan moiety in the catabolism of glycolipids, glycoproteins and oligosacharides. Recognizes sialyl linkage positions of the glycan moiety as well as the supramolecular organization of the sialoglycoconjugate. Displays preference for alpha-(2-&gt;3)-sialylated GD1a and GT1B gangliosides over alpha-(2-&gt;8)-sialylated GD1b, in both monomeric forms and micelles. Hydrolyzes monomeric GM1 ganglioside, but has no activity toward the miscellar form. Has lower sialidase activity for glycoproteins such as fetuin and TF/transferrin that carry a mixture of alpha-(2-&gt;3) and alpha-(2-&gt;6)-sialyl linkages. Cleaves milk oligosaccharide alpha-(2-&gt;3)-sialyllactose, but is inactive toward alpha-(2-&gt;6)-sialyllactose isomer. Has no activity toward colominic acid, a homomer of alpha-(2-&gt;8)-linked Neu5Ac residues. The chain is Sialidase-2 (NEU2) from Homo sapiens (Human).